Reading from the N-terminus, the 148-residue chain is NADPH-dependent 7-cyano-7-deazaguanine reductase (148 aa).

The Thioimide intermediate role is filled by Cys-50. Catalysis depends on Asp-57, which acts as the Proton donor. Substrate contacts are provided by residues 72–74 and 91–92; these read VES and HE.

Belongs to the GTP cyclohydrolase I family. QueF type 1 subfamily.

The protein resides in the cytoplasm. The enzyme catalyses 7-aminomethyl-7-carbaguanine + 2 NADP(+) = 7-cyano-7-deazaguanine + 2 NADPH + 3 H(+). It functions in the pathway tRNA modification; tRNA-queuosine biosynthesis. Functionally, catalyzes the NADPH-dependent reduction of 7-cyano-7-deazaguanine (preQ0) to 7-aminomethyl-7-deazaguanine (preQ1). The polypeptide is NADPH-dependent 7-cyano-7-deazaguanine reductase (Helicobacter pylori (strain HPAG1)).